The chain runs to 404 residues: Probable tRNA sulfurtransferase (404 aa).

Residues 60–165 (RSVIEALKPV…DEAAYLSHED (106 aa)) form the THUMP domain. Residues 183 to 184 (ML), 208 to 209 (HF), R265, G287, and Q296 each bind ATP.

The protein belongs to the ThiI family.

The protein resides in the cytoplasm. It catalyses the reaction [ThiI sulfur-carrier protein]-S-sulfanyl-L-cysteine + a uridine in tRNA + 2 reduced [2Fe-2S]-[ferredoxin] + ATP + H(+) = [ThiI sulfur-carrier protein]-L-cysteine + a 4-thiouridine in tRNA + 2 oxidized [2Fe-2S]-[ferredoxin] + AMP + diphosphate. It carries out the reaction [ThiS sulfur-carrier protein]-C-terminal Gly-Gly-AMP + S-sulfanyl-L-cysteinyl-[cysteine desulfurase] + AH2 = [ThiS sulfur-carrier protein]-C-terminal-Gly-aminoethanethioate + L-cysteinyl-[cysteine desulfurase] + A + AMP + 2 H(+). The protein operates within cofactor biosynthesis; thiamine diphosphate biosynthesis. Its function is as follows. Catalyzes the ATP-dependent transfer of a sulfur to tRNA to produce 4-thiouridine in position 8 of tRNAs, which functions as a near-UV photosensor. Also catalyzes the transfer of sulfur to the sulfur carrier protein ThiS, forming ThiS-thiocarboxylate. This is a step in the synthesis of thiazole, in the thiamine biosynthesis pathway. The sulfur is donated as persulfide by IscS. The chain is Probable tRNA sulfurtransferase from Streptococcus equi subsp. zooepidemicus (strain H70).